Reading from the N-terminus, the 394-residue chain is Elongation factor Tu (394 aa).

Positions 10 to 204 constitute a tr-type G domain; that stretch reads KPHVNIGTIG…AVDSYIPQPV (195 aa). Residues 19-26 form a G1 region; the sequence is GHVDHGKT. 19–26 serves as a coordination point for GTP; sequence GHVDHGKT. Residue T26 participates in Mg(2+) binding. The segment at 60–64 is G2; sequence GITIS. The tract at residues 81–84 is G3; the sequence is DCPG. GTP-binding positions include 81 to 85 and 136 to 139; these read DCPGH and NKVD. A G4 region spans residues 136–139; the sequence is NKVD. The segment at 174 to 176 is G5; sequence SAL.

The protein belongs to the TRAFAC class translation factor GTPase superfamily. Classic translation factor GTPase family. EF-Tu/EF-1A subfamily. Monomer.

It is found in the cytoplasm. The enzyme catalyses GTP + H2O = GDP + phosphate + H(+). GTP hydrolase that promotes the GTP-dependent binding of aminoacyl-tRNA to the A-site of ribosomes during protein biosynthesis. This Rickettsia parkeri protein is Elongation factor Tu.